A 243-amino-acid chain; its full sequence is uncharacterized protein (243 aa).

The protein resides in the nucleus. It is found in the nucleolus. This is an uncharacterized protein from Schizosaccharomyces pombe (strain 972 / ATCC 24843) (Fission yeast).